Here is a 326-residue protein sequence, read N- to C-terminus: Vitamin B12 import system permease protein BtuC (326 aa).

Transmembrane regions (helical) follow at residues W15–E35, L61–F81, P88–G108, L112–L132, L146–F166, G184–I204, G240–I260, V274–A294, and E302–L322.

It belongs to the binding-protein-dependent transport system permease family. FecCD subfamily. The complex is composed of two ATP-binding proteins (BtuD), two transmembrane proteins (BtuC) and a solute-binding protein (BtuF).

It localises to the cell inner membrane. In terms of biological role, part of the ABC transporter complex BtuCDF involved in vitamin B12 import. Involved in the translocation of the substrate across the membrane. The sequence is that of Vitamin B12 import system permease protein BtuC from Escherichia coli O9:H4 (strain HS).